We begin with the raw amino-acid sequence, 142 residues long: Phenylalanine ammonia-lyase (142 aa).

(E)-cinnamate contacts are provided by Lys-66, Glu-94, and Asn-97.

The protein belongs to the PAL/histidase family. As to quaternary structure, homotetramer. In terms of processing, contains an active site 4-methylidene-imidazol-5-one (MIO), which is formed autocatalytically by cyclization and dehydration of residues Ala-Ser-Gly.

Its subcellular location is the cytoplasm. The enzyme catalyses L-phenylalanine = (E)-cinnamate + NH4(+). Its pathway is phenylpropanoid metabolism; trans-cinnamate biosynthesis; trans-cinnamate from L-phenylalanine: step 1/1. Its function is as follows. Catalyzes the non-oxidative deamination of L-phenylalanine to form trans-cinnamic acid and a free ammonium ion. Facilitates the commitment step in phenylpropanoid pathways that produce secondary metabolites such as lignins, coumarins and flavonoids. The sequence is that of Phenylalanine ammonia-lyase (palA) from Agaricus bisporus (White button mushroom).